The chain runs to 271 residues: Phosphate import ATP-binding protein PstB (271 aa).

Residues 24–266 (MIGNDVSVYY…PDDQRTQDYI (243 aa)) enclose the ABC transporter domain. 56–63 (GPSGCGKS) lines the ATP pocket.

The protein belongs to the ABC transporter superfamily. Phosphate importer (TC 3.A.1.7) family. In terms of assembly, the complex is composed of two ATP-binding proteins (PstB), two transmembrane proteins (PstC and PstA) and a solute-binding protein (PstS).

It localises to the cell inner membrane. The enzyme catalyses phosphate(out) + ATP + H2O = ADP + 2 phosphate(in) + H(+). In terms of biological role, part of the ABC transporter complex PstSACB involved in phosphate import. Responsible for energy coupling to the transport system. This chain is Phosphate import ATP-binding protein PstB, found in Rhizobium meliloti (strain 1021) (Ensifer meliloti).